Reading from the N-terminus, the 456-residue chain is CBL-interacting serine/threonine-protein kinase 2 (456 aa).

The Protein kinase domain occupies 12–266; it reads YEVGRLLGQG…IAKIKESSWF (255 aa). ATP-binding positions include 18–26 and K41; that span reads LGQGTFAKV. Catalysis depends on D134, which acts as the Proton acceptor. Positions 152 to 181 are activation loop; sequence DFGLSALADCKRQDGLLHTTCGTPAYVAPE. S156 bears the Phosphoserine mark. T170 is modified (phosphothreonine). Residues 280 to 309 are disordered; the sequence is MEKQQVREATNPMEAGGSGQNENGENHEPP. The 25-residue stretch at 309–333 folds into the NAF domain; sequence PRLATLNAFDIIALSTGFGLAGLFG. The tract at residues 338–367 is PPI; sequence KRESRFASQKPASEIISKLVEVAKCLKLKI.

It belongs to the protein kinase superfamily. CAMK Ser/Thr protein kinase family. SNF1 subfamily. In terms of assembly, interacts with CBL2, CBL3 and CBL5. The cofactor is Mn(2+).

It catalyses the reaction L-seryl-[protein] + ATP = O-phospho-L-seryl-[protein] + ADP + H(+). The enzyme catalyses L-threonyl-[protein] + ATP = O-phospho-L-threonyl-[protein] + ADP + H(+). CIPK serine-threonine protein kinases interact with CBL proteins. Binding of a CBL protein to the regulatory NAF domain of CIPK protein lead to the activation of the kinase in a calcium-dependent manner. The protein is CBL-interacting serine/threonine-protein kinase 2 (CIPK2) of Arabidopsis thaliana (Mouse-ear cress).